A 252-amino-acid chain; its full sequence is 5'-nucleotidase SurE (252 aa).

A divalent metal cation-binding residues include D8, D9, S39, and N95.

This sequence belongs to the SurE nucleotidase family. It depends on a divalent metal cation as a cofactor.

The protein localises to the cytoplasm. The enzyme catalyses a ribonucleoside 5'-phosphate + H2O = a ribonucleoside + phosphate. In terms of biological role, nucleotidase that shows phosphatase activity on nucleoside 5'-monophosphates. This Clostridium botulinum (strain 657 / Type Ba4) protein is 5'-nucleotidase SurE.